Here is a 212-residue protein sequence, read N- to C-terminus: Urease accessory protein UreG (212 aa).

15-22 (GPVGSGKT) is a binding site for GTP.

This sequence belongs to the SIMIBI class G3E GTPase family. UreG subfamily. In terms of assembly, homodimer. UreD, UreF and UreG form a complex that acts as a GTP-hydrolysis-dependent molecular chaperone, activating the urease apoprotein by helping to assemble the nickel containing metallocenter of UreC. The UreE protein probably delivers the nickel.

The protein resides in the cytoplasm. In terms of biological role, facilitates the functional incorporation of the urease nickel metallocenter. This process requires GTP hydrolysis, probably effectuated by UreG. The chain is Urease accessory protein UreG from Opitutus terrae (strain DSM 11246 / JCM 15787 / PB90-1).